We begin with the raw amino-acid sequence, 703 residues long: Methionine--tRNA ligase (703 aa).

A 'HIGH' region motif is present at residues 15–25 (PYANGPVHLGH). C147, C150, C160, and C163 together coordinate Zn(2+). The 'KMSKS' region motif lies at 345 to 349 (KFSKS). Residue K348 coordinates ATP. Positions 602–703 (DFQKIDLRVA…GEGINGNSVS (102 aa)) constitute a tRNA-binding domain.

Belongs to the class-I aminoacyl-tRNA synthetase family. MetG type 1 subfamily. In terms of assembly, homodimer. Requires Zn(2+) as cofactor.

It is found in the cytoplasm. The catalysed reaction is tRNA(Met) + L-methionine + ATP = L-methionyl-tRNA(Met) + AMP + diphosphate. In terms of biological role, is required not only for elongation of protein synthesis but also for the initiation of all mRNA translation through initiator tRNA(fMet) aminoacylation. The chain is Methionine--tRNA ligase from Chlorobaculum tepidum (strain ATCC 49652 / DSM 12025 / NBRC 103806 / TLS) (Chlorobium tepidum).